The chain runs to 109 residues: B melanoma antigen 3 (109 aa).

The first 17 residues, 1–17, serve as a signal peptide directing secretion; it reads MAAGVVFLALSAQLLQA.

This sequence belongs to the BAGE family. As to expression, not expressed in normal tissues except in testis. Expressed in melanoma, bladder and lung carcinomas.

The protein localises to the secreted. Its function is as follows. Unknown. Candidate gene encoding tumor antigens. The polypeptide is B melanoma antigen 3 (BAGE3) (Homo sapiens (Human)).